We begin with the raw amino-acid sequence, 249 residues long: Globin-like protein 9 (249 aa).

The segment at threonine 20–arginine 43 is disordered. The Globin domain maps to serine 52–glutamate 205. Residues histidine 116 and histidine 148 each coordinate heme.

The protein belongs to the globin family.

The chain is Globin-like protein 9 (glb-9) from Caenorhabditis elegans.